The sequence spans 162 residues: MNKIAIYPGTFDPITNGHVDLVERALNIFDEIVVAVSTAYGKNTLFDIRIREQMIKEVFKDNQRVKVVSFQGLLVDTAVKHNACAIVRGLRAVSDFDYEFQMSSMNNKLNSDIQTIFLTPSEKFSCISSTLVRAVAIHNYKRVDEFVPECVFREIKLKYSKE.

Residue threonine 10 coordinates substrate. ATP-binding positions include threonine 10–phenylalanine 11 and histidine 18. Substrate contacts are provided by lysine 42, leucine 74, and arginine 88. ATP contacts are provided by residues glycine 89 to arginine 91, glutamate 99, and phenylalanine 124 to threonine 130.

This sequence belongs to the bacterial CoaD family. As to quaternary structure, homohexamer. Mg(2+) is required as a cofactor.

The protein localises to the cytoplasm. The enzyme catalyses (R)-4'-phosphopantetheine + ATP + H(+) = 3'-dephospho-CoA + diphosphate. It functions in the pathway cofactor biosynthesis; coenzyme A biosynthesis; CoA from (R)-pantothenate: step 4/5. Reversibly transfers an adenylyl group from ATP to 4'-phosphopantetheine, yielding dephospho-CoA (dPCoA) and pyrophosphate. In Francisella tularensis subsp. novicida (strain U112), this protein is Phosphopantetheine adenylyltransferase.